The sequence spans 287 residues: Shikimate dehydrogenase (NADP(+)) (287 aa).

Shikimate-binding positions include 21–23 and Thr-68; that span reads SKS. Lys-72 functions as the Proton acceptor in the catalytic mechanism. Positions 93 and 109 each coordinate shikimate. NADP(+) contacts are provided by residues 133 to 137, 157 to 162, and Met-226; these read GAGGA and NRTQTK. A shikimate-binding site is contributed by Tyr-228. Gly-250 provides a ligand contact to NADP(+).

Belongs to the shikimate dehydrogenase family. In terms of assembly, homodimer.

It catalyses the reaction shikimate + NADP(+) = 3-dehydroshikimate + NADPH + H(+). It functions in the pathway metabolic intermediate biosynthesis; chorismate biosynthesis; chorismate from D-erythrose 4-phosphate and phosphoenolpyruvate: step 4/7. Functionally, involved in the biosynthesis of the chorismate, which leads to the biosynthesis of aromatic amino acids. Catalyzes the reversible NADPH linked reduction of 3-dehydroshikimate (DHSA) to yield shikimate (SA). In Shewanella oneidensis (strain ATCC 700550 / JCM 31522 / CIP 106686 / LMG 19005 / NCIMB 14063 / MR-1), this protein is Shikimate dehydrogenase (NADP(+)).